Here is a 45-residue protein sequence, read N- to C-terminus: Parabutoporin (45 aa).

Monomer and homodimer. Expressed by the venom gland.

It is found in the secreted. The protein localises to the target cell membrane. At high concentrations, acts as a pore former in cellular membranes and causes the leakage of the cells. At submicromolar concentrations, degranulates granulocytes and has a weak hemolytic activity against human red blood cells. Also strongly inhibits the production of superoxide anions. Has a strong antibacterial activity against Gram-negative bacteria but is less active against Gram-positive bacteria. Also has antifungal activity. Induces reversible G-protein dependent Ca(2+) release from intracellular stores and increase Ca(2+) influx in HL-60 cells. Induces the activation of the Rac pathway in granulocytes. Synergistically enhances the excitatory effects of short and long chain ion-channel-specific neurotoxins by interaction with the neuronal membranes. The chain is Parabutoporin from Parabuthus schlechteri (Scorpion).